The chain runs to 240 residues: 4-hydroxy-tetrahydrodipicolinate reductase (240 aa).

Residues 79–81 and 103–106 contribute to the NAD(+) site; these read ATT and SANM. His135 acts as the Proton donor/acceptor in catalysis. His136 provides a ligand contact to (S)-2,3,4,5-tetrahydrodipicolinate. The Proton donor role is filled by Lys139. Residue 145 to 146 participates in (S)-2,3,4,5-tetrahydrodipicolinate binding; the sequence is GT.

It belongs to the DapB family.

Its subcellular location is the cytoplasm. The enzyme catalyses (S)-2,3,4,5-tetrahydrodipicolinate + NAD(+) + H2O = (2S,4S)-4-hydroxy-2,3,4,5-tetrahydrodipicolinate + NADH + H(+). The catalysed reaction is (S)-2,3,4,5-tetrahydrodipicolinate + NADP(+) + H2O = (2S,4S)-4-hydroxy-2,3,4,5-tetrahydrodipicolinate + NADPH + H(+). It functions in the pathway amino-acid biosynthesis; L-lysine biosynthesis via DAP pathway; (S)-tetrahydrodipicolinate from L-aspartate: step 4/4. Its function is as follows. Catalyzes the conversion of 4-hydroxy-tetrahydrodipicolinate (HTPA) to tetrahydrodipicolinate. In Staphylococcus aureus (strain MSSA476), this protein is 4-hydroxy-tetrahydrodipicolinate reductase.